A 225-amino-acid polypeptide reads, in one-letter code: Cytochrome c oxidase subunit 2 (225 aa).

Residues 1 to 25 (MSTWMMFMFQESNSLYADNLVSFHN) are Mitochondrial intermembrane-facing. A helical transmembrane segment spans residues 26–47 (MVMIIVIMISTLTVYIIFDLFL). Residues 48–62 (NKFSNLYLLKNHNIE) are Mitochondrial matrix-facing. The helical transmembrane segment at 63-82 (IIWMIVPIVILLIICFPSLK) threads the bilayer. Residues 83 to 225 (ILYLIDEIVN…YFMNWIYKMN (143 aa)) lie on the Mitochondrial intermembrane side of the membrane. 6 residues coordinate Cu cation: H159, C194, E196, C198, H202, and M205. E196 is a Mg(2+) binding site.

Belongs to the cytochrome c oxidase subunit 2 family. As to quaternary structure, component of the cytochrome c oxidase (complex IV, CIV), a multisubunit enzyme composed of a catalytic core of 3 subunits and several supernumerary subunits. The complex exists as a monomer or a dimer and forms supercomplexes (SCs) in the inner mitochondrial membrane with ubiquinol-cytochrome c oxidoreductase (cytochrome b-c1 complex, complex III, CIII). Cu cation serves as cofactor.

It is found in the mitochondrion inner membrane. It catalyses the reaction 4 Fe(II)-[cytochrome c] + O2 + 8 H(+)(in) = 4 Fe(III)-[cytochrome c] + 2 H2O + 4 H(+)(out). Functionally, component of the cytochrome c oxidase, the last enzyme in the mitochondrial electron transport chain which drives oxidative phosphorylation. The respiratory chain contains 3 multisubunit complexes succinate dehydrogenase (complex II, CII), ubiquinol-cytochrome c oxidoreductase (cytochrome b-c1 complex, complex III, CIII) and cytochrome c oxidase (complex IV, CIV), that cooperate to transfer electrons derived from NADH and succinate to molecular oxygen, creating an electrochemical gradient over the inner membrane that drives transmembrane transport and the ATP synthase. Cytochrome c oxidase is the component of the respiratory chain that catalyzes the reduction of oxygen to water. Electrons originating from reduced cytochrome c in the intermembrane space (IMS) are transferred via the dinuclear copper A center (CU(A)) of subunit 2 and heme A of subunit 1 to the active site in subunit 1, a binuclear center (BNC) formed by heme A3 and copper B (CU(B)). The BNC reduces molecular oxygen to 2 water molecules using 4 electrons from cytochrome c in the IMS and 4 protons from the mitochondrial matrix. The sequence is that of Cytochrome c oxidase subunit 2 (COII) from Apis florea (Dwarf honeybee).